A 347-amino-acid chain; its full sequence is MDKENSKQTAQPPVVDPARLKQLNLAIETLEKQFGKGSIMRLGDDSAVMHVKAISTGSMALDYALGVGGFPRGRVTEIYGPESSGKTTLALHAIAEAQKEGGIAALVDAEHAFDPTYARKLGVDINSLLVSQPESGEQALSIVETLVRSGAVDIVVVDSVAALVPQAELEGEMGDSVVGLQARLMSQALRKLTGAISKSSSVCIFINQLRDKIGVMYGSPETTTGGKALKFYSSVRLDIRRIAQIKDGEEVVGNRTKVKVVKNKVAPPFKIAEFDILYGEGISVLGELIDLAVEFGIIKKAGAWFSYGSEKLGQGRENVKRLLKEDETVRNTIRQQVRDTLTGTPTE.

Position 80 to 87 (Gly80 to Thr87) interacts with ATP.

Belongs to the RecA family.

The protein resides in the cytoplasm. In terms of biological role, can catalyze the hydrolysis of ATP in the presence of single-stranded DNA, the ATP-dependent uptake of single-stranded DNA by duplex DNA, and the ATP-dependent hybridization of homologous single-stranded DNAs. It interacts with LexA causing its activation and leading to its autocatalytic cleavage. This chain is Protein RecA, found in Chlorobaculum parvum (strain DSM 263 / NCIMB 8327) (Chlorobium vibrioforme subsp. thiosulfatophilum).